Here is a 186-residue protein sequence, read N- to C-terminus: Large ribosomal subunit protein eL15 (186 aa).

Positions 163 to 186 (RGLTSAGKKGRGLNKKGKGAEKVR) are disordered. The span at 170 to 179 (KKGRGLNKKG) shows a compositional bias: basic residues.

This sequence belongs to the eukaryotic ribosomal protein eL15 family.

The protein is Large ribosomal subunit protein eL15 of Methanosphaera stadtmanae (strain ATCC 43021 / DSM 3091 / JCM 11832 / MCB-3).